The following is a 124-amino-acid chain: Small ribosomal subunit protein uS12 (124 aa).

Residues 1 to 32 (MPTIQQLVRKGRQDKVEKTKTPALKGSPQRRG) form a disordered region. Over residues 11-20 (GRQDKVEKTK) the composition is skewed to basic and acidic residues. D89 bears the 3-methylthioaspartic acid mark.

Belongs to the universal ribosomal protein uS12 family. In terms of assembly, part of the 30S ribosomal subunit. Contacts proteins S8 and S17. May interact with IF1 in the 30S initiation complex.

Functionally, with S4 and S5 plays an important role in translational accuracy. Its function is as follows. Interacts with and stabilizes bases of the 16S rRNA that are involved in tRNA selection in the A site and with the mRNA backbone. Located at the interface of the 30S and 50S subunits, it traverses the body of the 30S subunit contacting proteins on the other side and probably holding the rRNA structure together. The combined cluster of proteins S8, S12 and S17 appears to hold together the shoulder and platform of the 30S subunit. In Frankia alni (strain DSM 45986 / CECT 9034 / ACN14a), this protein is Small ribosomal subunit protein uS12.